Consider the following 518-residue polypeptide: ATP synthase subunit beta 2 (518 aa).

154-161 (GGAGVGKT) is a binding site for ATP. Positions 455-518 (IDEAKGKAKP…TDHAADTHES (64 aa)) are disordered. 2 stretches are compositionally biased toward basic and acidic residues: residues 473 to 485 (PDSK…DPKP) and 507 to 518 (PETDHAADTHES).

It belongs to the ATPase alpha/beta chains family. F-type ATPases have 2 components, CF(1) - the catalytic core - and CF(0) - the membrane proton channel. CF(1) has five subunits: alpha(3), beta(3), gamma(1), delta(1), epsilon(1). CF(0) has three main subunits: a(1), b(2) and c(9-12). The alpha and beta chains form an alternating ring which encloses part of the gamma chain. CF(1) is attached to CF(0) by a central stalk formed by the gamma and epsilon chains, while a peripheral stalk is formed by the delta and b chains.

The protein resides in the cell inner membrane. It catalyses the reaction ATP + H2O + 4 H(+)(in) = ADP + phosphate + 5 H(+)(out). Its function is as follows. Produces ATP from ADP in the presence of a proton gradient across the membrane. The catalytic sites are hosted primarily by the beta subunits. The polypeptide is ATP synthase subunit beta 2 (Albidiferax ferrireducens (strain ATCC BAA-621 / DSM 15236 / T118) (Rhodoferax ferrireducens)).